Reading from the N-terminus, the 204-residue chain is Large ribosomal subunit protein eL15 (204 aa).

The protein belongs to the eukaryotic ribosomal protein eL15 family. Component of the large ribosomal subunit.

The protein localises to the cytoplasm. Functionally, component of the large ribosomal subunit. The ribosome is a large ribonucleoprotein complex responsible for the synthesis of proteins in the cell. The chain is Large ribosomal subunit protein eL15 (rpl15) from Monopterus albus (Swamp eel).